A 293-amino-acid polypeptide reads, in one-letter code: MAEELKKTTKEKTPVKKSSKVSASKAPTKKVTKTTEVKKADKLEKVSKPKSESTKVSKVSVKSVKTESIKSEPVKTKKSKIKVLSSKTNEAKNILFKNTVSLPKGIFGLSEEKINTQAIFDSILFERASQRQGTHSTKTRSEVSGGGKKPWKQKGTGRARAGSTRSPIWVGGGITFGPKPQKKYDFKINKKVRNLAFLSSLTLLANKNAILVEDLKLEKISSQELIKKLEDLKINNLKKILIVSDDEKIFKSGRNVQNLHVVKLNSLTVELLNETHALLLSKKDLTTLESRVK.

Basic and acidic residues-rich tracts occupy residues 1–14 and 33–55; these read MAEE…EKTP and KTTE…ESTK. Disordered stretches follow at residues 1-72 and 130-166; these read MAEE…IKSE and QRQG…STRS.

It belongs to the universal ribosomal protein uL4 family. As to quaternary structure, part of the 50S ribosomal subunit.

One of the primary rRNA binding proteins, this protein initially binds near the 5'-end of the 23S rRNA. It is important during the early stages of 50S assembly. It makes multiple contacts with different domains of the 23S rRNA in the assembled 50S subunit and ribosome. In terms of biological role, forms part of the polypeptide exit tunnel. This chain is Large ribosomal subunit protein uL4, found in Mycoplasma mobile (strain ATCC 43663 / 163K / NCTC 11711) (Mesomycoplasma mobile).